Reading from the N-terminus, the 220-residue chain is MVVTLGYWDIRGLAHAIRLLLEYTETPYQERRYKAGPAPDFDPSDWTNEKEKLGLDFPNLPYLIDGDVKLTQSNAILRYIARKHNMCGETEVEKQRVDVLENHLMDLRMAFARLCYSPDFEKLKPAYLEQLPGKLRQLSRFLGSRSWFVGDKLTFVDFLAYDVLDQQRMFVPDCPELQGNLSQFLQRFEALEKISAYMRSGRFMKAPIFWYTALWNNKKE.

The region spanning 2 to 88 (VVTLGYWDIR…YIARKHNMCG (87 aa)) is the GST N-terminal domain. Residues 7 to 8 (YW), 43 to 46 (PSDW), lysine 50, 59 to 60 (NL), and 72 to 73 (QS) contribute to the glutathione site. The region spanning 90–208 (TEVEKQRVDV…RSGRFMKAPI (119 aa)) is the GST C-terminal domain. Substrate is bound at residue tyrosine 116.

It belongs to the GST superfamily. Mu family. Homodimer.

The protein resides in the cytoplasm. It carries out the reaction RX + glutathione = an S-substituted glutathione + a halide anion + H(+). Conjugation of reduced glutathione to a wide number of exogenous and endogenous hydrophobic electrophiles. Participates in the formation of novel hepoxilin regioisomers. The chain is Glutathione S-transferase 2 (GSTM2) from Gallus gallus (Chicken).